Here is a 353-residue protein sequence, read N- to C-terminus: S-adenosylmethionine:tRNA ribosyltransferase-isomerase (353 aa).

This sequence belongs to the QueA family. As to quaternary structure, monomer.

It localises to the cytoplasm. It carries out the reaction 7-aminomethyl-7-carbaguanosine(34) in tRNA + S-adenosyl-L-methionine = epoxyqueuosine(34) in tRNA + adenine + L-methionine + 2 H(+). Its pathway is tRNA modification; tRNA-queuosine biosynthesis. In terms of biological role, transfers and isomerizes the ribose moiety from AdoMet to the 7-aminomethyl group of 7-deazaguanine (preQ1-tRNA) to give epoxyqueuosine (oQ-tRNA). This is S-adenosylmethionine:tRNA ribosyltransferase-isomerase from Maricaulis maris (strain MCS10) (Caulobacter maris).